A 235-amino-acid polypeptide reads, in one-letter code: Small ribosomal subunit protein uS2 (235 aa).

The protein belongs to the universal ribosomal protein uS2 family.

The chain is Small ribosomal subunit protein uS2 from Anoxybacillus flavithermus (strain DSM 21510 / WK1).